Consider the following 230-residue polypeptide: Ribosomal RNA small subunit methyltransferase G (230 aa).

S-adenosyl-L-methionine-binding positions include Gly95, Phe100, 146–147 (GE), and Arg159.

Belongs to the methyltransferase superfamily. RNA methyltransferase RsmG family.

It is found in the cytoplasm. Its function is as follows. Specifically methylates the N7 position of a guanine in 16S rRNA. In Parabacteroides distasonis (strain ATCC 8503 / DSM 20701 / CIP 104284 / JCM 5825 / NCTC 11152), this protein is Ribosomal RNA small subunit methyltransferase G.